A 221-amino-acid chain; its full sequence is CASP-like protein 4C1 (221 aa).

The tract at residues 1 to 21 is disordered; it reads MDSPESSDRGLNPMTPDHGGH. Topologically, residues 1-54 are cytoplasmic; sequence MDSPESSDRGLNPMTPDHGGHNGKVVHYFGQGVEGGPASPRKLGHGHLHPKANT. A helical transmembrane segment spans residues 55 to 75; it reads ALLLLRLLTFAFSLASLVIMA. Over 76-101 the chain is Extracellular; that stretch reads TNSATTTATAGRHRTVNWVDFDTYRY. A helical membrane pass occupies residues 102-122; the sequence is VLAACAIVCLYSFAEIGLGLW. The Cytoplasmic portion of the chain corresponds to 123 to 144; the sequence is YLLKGRMVMPESMAHWFDFGHD. The helical transmembrane segment at 145–165 threads the bilayer; that stretch reads QGFAYLIFSACSGATAVAHNL. Over 166-189 the chain is Extracellular; it reads RERHILIHGMYGCDEANSFCMKAE. Residues 190–210 form a helical membrane-spanning segment; the sequence is ISIGLAFGAFLFIALSSLLSG. The Cytoplasmic portion of the chain corresponds to 211-221; it reads YRLVKWLILGP.

This sequence belongs to the Casparian strip membrane proteins (CASP) family. As to quaternary structure, homodimer and heterodimers.

The protein localises to the cell membrane. This chain is CASP-like protein 4C1, found in Pteridium aquilinum subsp. aquilinum (Bracken fern).